Here is a 545-residue protein sequence, read N- to C-terminus: Resolvase homolog YokA (545 aa).

In terms of domain architecture, Resolvase/invertase-type recombinase catalytic spans 14–165; it reads NILGYLRRSR…GAKYTYAAQG (152 aa). The stretch at 19–46 forms a coiled coil; sequence LRRSRQDMEREKRTGEDTLTEQKELMNK. Residue serine 22 is the O-(5'-phospho-DNA)-serine intermediate of the active site. A DNA-binding region (recombinase) is located at residues 173 to 303; that stretch reads PYGYQLNKKT…VKIANKVPLL (131 aa). A coiled-coil region spans residues 402–475; the sequence is NMKTKKQMSE…QDTQSEIDSN (74 aa).

In the N-terminal section; belongs to the site-specific recombinase resolvase family.

This is Resolvase homolog YokA (yokA) from Bacillus subtilis (strain 168).